Consider the following 320-residue polypeptide: Ferrochelatase (320 aa).

Fe cation contacts are provided by H194 and E275.

The protein belongs to the ferrochelatase family. In terms of assembly, monomer.

It is found in the cytoplasm. It carries out the reaction heme b + 2 H(+) = protoporphyrin IX + Fe(2+). It participates in porphyrin-containing compound metabolism; protoheme biosynthesis; protoheme from protoporphyrin-IX: step 1/1. Catalyzes the ferrous insertion into protoporphyrin IX. The protein is Ferrochelatase of Escherichia coli (strain K12 / MC4100 / BW2952).